The chain runs to 151 residues: UPF0561 protein C2orf68 homolog (151 aa).

The disordered stretch occupies residues 1-89 (MEEEGEAQGR…TLKDEPNDNG (89 aa)). 2 stretches are compositionally biased toward basic and acidic residues: residues 32-46 (LARD…QAKE) and 70-85 (RQRE…KDEP).

This sequence belongs to the UPF0561 family.

The chain is UPF0561 protein C2orf68 homolog from Xenopus laevis (African clawed frog).